The primary structure comprises 424 residues: Spermatogenesis-associated protein 2-like protein (424 aa).

2 disordered regions span residues 233–258 (EDEGSEDASLYGEPSPGPDSPPAELA) and 273–300 (TGGRAWEPPAEELPQASSPPYGALEEGL). Phosphoserine is present on serine 327.

This sequence belongs to the SPATA2 family.

This is Spermatogenesis-associated protein 2-like protein from Homo sapiens (Human).